Consider the following 442-residue polypeptide: MRRGERRGPAGPLGDGPALGLRRSTESEVYDDGTNTFFWRAHTLTVLFILTCALGYVTLLEETPQDTAYNTKRGIVASILVFLCFGVTQAKDGPFSRPHPAYWRFWLCVSVVYELFLIFILFQTVQDGRQFMKYIDPHLGVPLPERDYGGNCLIYDPGNESDPFHNIWDKLDGFVPAHFFGWYLKTLMIRDWWMCMIISVMFEFLEYSLEHQLPNFSECWWDHWIMDVILCNGLGIYCGMKTLSWLSLKTYKWQGLWNIPTYKGKMKRIVFQFTPYSWVKFEWKPASSLRRWLAVCGIIFVFLLAELNTFYLKFVLWMPPEHYLVLLRLVFFVNVGGVAMREIYDFMDDPKFHKKLGQQAWLVAAITATEFLIVVKYDPYTLTLSLPFYITQCWILGIILVLTWTAWRFFIRDITLRYKEIRRQKQEHKYEKDKCLSNGDGH.

The Cytoplasmic portion of the chain corresponds to 1–40; that stretch reads MRRGERRGPAGPLGDGPALGLRRSTESEVYDDGTNTFFWR. A helical transmembrane segment spans residues 41 to 61; it reads AHTLTVLFILTCALGYVTLLE. Residues 62–74 lie on the Lumenal side of the membrane; that stretch reads ETPQDTAYNTKRG. The helical transmembrane segment at 75–95 threads the bilayer; sequence IVASILVFLCFGVTQAKDGPF. At 96–104 the chain is on the cytoplasmic side; that stretch reads SRPHPAYWR. A helical transmembrane segment spans residues 105 to 125; the sequence is FWLCVSVVYELFLIFILFQTV. Residues 126-291 are Lumenal-facing; sequence QDGRQFMKYI…EWKPASSLRR (166 aa). Residues Asn159 and Asn215 are each glycosylated (N-linked (GlcNAc...) asparagine). A helical membrane pass occupies residues 292-312; sequence WLAVCGIIFVFLLAELNTFYL. Residue Lys313 is a topological domain, cytoplasmic. The chain crosses the membrane as a helical span at residues 314-334; it reads FVLWMPPEHYLVLLRLVFFVN. The Lumenal segment spans residues 335-354; that stretch reads VGGVAMREIYDFMDDPKFHK. Residues 355–375 form a helical membrane-spanning segment; the sequence is KLGQQAWLVAAITATEFLIVV. Residues 376–381 lie on the Cytoplasmic side of the membrane; it reads KYDPYT. A helical membrane pass occupies residues 382–402; sequence LTLSLPFYITQCWILGIILVL. At 403–442 the chain is on the lumenal side; sequence TWTAWRFFIRDITLRYKEIRRQKQEHKYEKDKCLSNGDGH.

The protein belongs to the phosphatidyl serine synthase family.

It localises to the endoplasmic reticulum membrane. The enzyme catalyses a 1,2-diacyl-sn-glycero-3-phosphoethanolamine + L-serine = a 1,2-diacyl-sn-glycero-3-phospho-L-serine + ethanolamine. The catalysed reaction is 1-hexadecanoyl-2-(9Z-octadecenoyl)-sn-glycero-3-phosphoethanolamine + L-serine = 1-hexadecanoyl-2-(9Z-octadecenoyl)-sn-glycero-3-phospho-L-serine + ethanolamine. It catalyses the reaction 1-hexadecanoyl-2-(4Z,7Z,10Z,13Z,16Z,19Z-docosahexaenoyl)-sn-glycero-3-phosphoethanolamine + L-serine = 1-hexadecanoyl-2-(4Z,7Z,10Z,13Z,16Z,19Z-docosahexaenoyl)-sn-glycero-3-phosphoserine + ethanolamine. It carries out the reaction 1-octadecanoyl-2-(5Z,8Z,11Z,14Z)-eicosatetraenoyl-sn-glycero-3-phosphoethanolamine + L-serine = 1-octadecanoyl-2-(5Z,8Z,11Z,14Z)-eicosatetraenoyl-sn-glycero-3-phosphoserine + ethanolamine. The enzyme catalyses 1-octadecanoyl-2-(4Z,7Z,10Z,13Z,16Z,19Z-docosahexaenoyl)-sn-glycero-3-phosphoethanolamine + L-serine = 1-octadecanoyl-2-(4Z,7Z,10Z,13Z,16Z,19Z-docosahexaenoyl)-sn-glycero-3-phosphoserine + ethanolamine. The catalysed reaction is 1-(1Z-octadecenyl)-2-(4Z,7Z,10Z,13Z,16Z,19Z-docosahexaenoyl)-sn-glycero-3-phosphoethanolamine + L-serine = 1-(1Z-octadecenyl)-2-(4Z,7Z,10Z,13Z,16Z,19Z-docosahexaenoyl)-sn-glycero-3-phospho-L-serine + ethanolamine. It catalyses the reaction 1-octadecanoyl-2-(9Z-octadecenoyl)-sn-glycero-3-phosphoethanolamine + L-serine = 1-octadecanoyl-2-(9Z-octadecenoyl)-sn-glycero-3-phospho-L-serine + ethanolamine. It carries out the reaction 1-(1Z-octadecenyl)-2-(9Z-octadecenoyl)-sn-glycero-3-phosphoethanolamine + L-serine = 1-(1Z-octadecenyl)-2-(9Z-octadecenoyl)-sn-glycero-3-phospho-L-serine + ethanolamine. The enzyme catalyses 1-(1Z-octadecenyl)-2-(5Z,8Z,11Z,14Z- eicosatetraenoyl)-sn-glycero-3-phosphoethanolamine + L-serine = 1-(1Z-octadecenyl)-2-(5Z,8Z,11Z,14Z-eicosatetraenoyl)-sn-glycero-3-phospho-L-serine + ethanolamine. It functions in the pathway phospholipid metabolism; phosphatidylserine biosynthesis. Its function is as follows. Catalyzes a base-exchange reaction in which the polar head group of phosphatidylethanolamine (PE) or phosphatidylcholine (PC) is replaced by L-serine. Catalyzes the conversion of phosphatatidylethanolamine and does not act on phosphatidylcholine. Can utilize both phosphatidylethanolamine (PE) plasmalogen and diacyl PE as substrate and the latter is six times better utilized, indicating the importance of an ester linkage at the sn-1 position. Although it shows no sn-1 fatty acyl preference, exhibits significant preference towards docosahexaenoic acid (22:6n-3) compared with 18:1 or 20:4 at the sn-2 position. The protein is Phosphatidylserine synthase 2 (PTDSS1) of Gallus gallus (Chicken).